The sequence spans 1090 residues: ATP-dependent helicase/deoxyribonuclease subunit B (1090 aa).

7 to 14 (GPVGSGKS) is a binding site for ATP. Residues C719, C1035, C1038, and C1044 each contribute to the [4Fe-4S] cluster site.

The protein belongs to the helicase family. AddB/RexB type 1 subfamily. In terms of assembly, heterodimer of AddA and AddB. Mg(2+) is required as a cofactor. The cofactor is [4Fe-4S] cluster.

In terms of biological role, the heterodimer acts as both an ATP-dependent DNA helicase and an ATP-dependent, dual-direction single-stranded exonuclease. Recognizes the chi site generating a DNA molecule suitable for the initiation of homologous recombination. The AddB subunit has 5' -&gt; 3' nuclease activity but not helicase activity. This chain is ATP-dependent helicase/deoxyribonuclease subunit B, found in Carboxydothermus hydrogenoformans (strain ATCC BAA-161 / DSM 6008 / Z-2901).